The primary structure comprises 319 residues: Mitochondrial fission regulator 1-like (319 aa).

The tract at residues 1–35 (MASLGAGAEPESVLFGKDGTEACESPEGRRSGRRK) is disordered.

The protein belongs to the MTFR1 family.

The protein resides in the mitochondrion outer membrane. Its function is as follows. Mitochondrial protein required for adaptation of miochondrial dynamics to metabolic changes. Regulates mitochondrial morphology at steady state and mediates AMPK-dependent stress-induced mitochondrial fragmentation via the control of OPA1 levels. The chain is Mitochondrial fission regulator 1-like (mtfr1l) from Xenopus tropicalis (Western clawed frog).